A 238-amino-acid chain; its full sequence is CD63 antigen (238 aa).

Topologically, residues 1–11 (MAVEGGMKCVK) are cytoplasmic. Residues 12 to 32 (FLLYVLLLAFCACAVGLIAVG) form a helical membrane-spanning segment. Over 33-51 (VGAQLVLRQTIVQGATPGS) the chain is Extracellular. The helical transmembrane segment at 52-72 (LLPVVIIAVGAFLFLVAFVGC) threads the bilayer. The Cytoplasmic segment spans residues 73–81 (CGACKENYC). A helical membrane pass occupies residues 82 to 102 (LMVTFAIFLSLIMLVEVAVAI). Over 103–202 (AGYVFRDKVM…EKIGGWLRSN (100 aa)) the chain is Extracellular. Residues asparagine 130, asparagine 150, and asparagine 172 are each glycosylated (N-linked (GlcNAc...) asparagine). A helical membrane pass occupies residues 203–223 (VLVVAAAALGIAFVEVLGIIF). At 224–238 (ACCLVKSIRSGYEVM) the chain is on the cytoplasmic side. The Lysosomal targeting motif motif lies at 234–238 (GYEVM).

The protein belongs to the tetraspanin (TM4SF) family. Interacts with TIMP1 and ITGB1 and recruits TIMP1 to ITGB1. Interacts with CD9. Identified in a complex with CD9 and ITGB3. Interacts with PMEL. Interacts with KDR/VEGFR2; identified in a complex with ITGB1 and KDR/VEGFR2 and is required to recruit KDR to ITGB1 complexes. Interacts with SYT7. Palmitoylated at a low, basal level in unstimulated platelets. The level of palmitoylation increases when platelets are activated by thrombin (in vitro).

Its subcellular location is the cell membrane. The protein localises to the lysosome membrane. It localises to the late endosome membrane. It is found in the endosome. The protein resides in the multivesicular body. Its subcellular location is the melanosome. The protein localises to the secreted. It localises to the extracellular exosome. It is found in the cell surface. Functionally, functions as a cell surface receptor for TIMP1 and plays a role in the activation of cellular signaling cascades. Plays a role in the activation of ITGB1 and integrin signaling, leading to the activation of AKT, FAK/PTK2 and MAP kinases. Promotes cell survival, reorganization of the actin cytoskeleton, cell adhesion, spreading and migration, via its role in the activation of AKT and FAK/PTK2. Plays a role in VEGFA signaling via its role in regulating the internalization of KDR/VEGFR2. Plays a role in intracellular vesicular transport processes, and is required for normal trafficking of the PMEL luminal domain that is essential for the development and maturation of melanocytes. Plays a role in the adhesion of leukocytes onto endothelial cells via its role in the regulation of SELP trafficking. May play a role in mast cell degranulation in response to Ms4a2/FceRI stimulation, but not in mast cell degranulation in response to other stimuli. This chain is CD63 antigen (CD63), found in Felis catus (Cat).